Here is a 212-residue protein sequence, read N- to C-terminus: Probable transaldolase (212 aa).

Lys84 (schiff-base intermediate with substrate) is an active-site residue.

The protein belongs to the transaldolase family. Type 3B subfamily.

Its subcellular location is the cytoplasm. It carries out the reaction D-sedoheptulose 7-phosphate + D-glyceraldehyde 3-phosphate = D-erythrose 4-phosphate + beta-D-fructose 6-phosphate. It functions in the pathway carbohydrate degradation; pentose phosphate pathway; D-glyceraldehyde 3-phosphate and beta-D-fructose 6-phosphate from D-ribose 5-phosphate and D-xylulose 5-phosphate (non-oxidative stage): step 2/3. Functionally, transaldolase is important for the balance of metabolites in the pentose-phosphate pathway. The chain is Probable transaldolase from Bacillus pumilus (strain SAFR-032).